Consider the following 484-residue polypeptide: Glutamate--tRNA ligase (484 aa).

A 'HIGH' region motif is present at residues 11–21; it reads PSPTGYLHIGN. A 'KMSKS' region motif is present at residues 252–256; it reads KLSKR. Lys-255 is a binding site for ATP.

Belongs to the class-I aminoacyl-tRNA synthetase family. Glutamate--tRNA ligase type 1 subfamily. In terms of assembly, monomer.

The protein localises to the cytoplasm. The catalysed reaction is tRNA(Glu) + L-glutamate + ATP = L-glutamyl-tRNA(Glu) + AMP + diphosphate. Its function is as follows. Catalyzes the attachment of glutamate to tRNA(Glu) in a two-step reaction: glutamate is first activated by ATP to form Glu-AMP and then transferred to the acceptor end of tRNA(Glu). The sequence is that of Glutamate--tRNA ligase from Staphylococcus aureus (strain COL).